The following is a 428-amino-acid chain: Enolase (428 aa).

Residue Q162 coordinates (2R)-2-phosphoglycerate. E204 (proton donor) is an active-site residue. 3 residues coordinate Mg(2+): D241, E283, and D310. (2R)-2-phosphoglycerate-binding residues include K335, R364, S365, and K386. K335 serves as the catalytic Proton acceptor.

The protein belongs to the enolase family. Requires Mg(2+) as cofactor.

Its subcellular location is the cytoplasm. It localises to the secreted. The protein localises to the cell surface. The catalysed reaction is (2R)-2-phosphoglycerate = phosphoenolpyruvate + H2O. Its pathway is carbohydrate degradation; glycolysis; pyruvate from D-glyceraldehyde 3-phosphate: step 4/5. In terms of biological role, catalyzes the reversible conversion of 2-phosphoglycerate (2-PG) into phosphoenolpyruvate (PEP). It is essential for the degradation of carbohydrates via glycolysis. The sequence is that of Enolase from Rhodococcus jostii (strain RHA1).